A 799-amino-acid chain; its full sequence is Phenylalanine--tRNA ligase beta subunit (799 aa).

Residues 39–150 (GKGFSGVIVG…EHLQAGTALN (112 aa)) form the tRNA-binding domain. Residues 402–478 (FLELTIRCRL…RIYGYDHIPR (77 aa)) form the B5 domain. The Mg(2+) site is built by aspartate 456, aspartate 462, glutamate 465, and glutamate 466. The region spanning 705 to 798 (AIYPGSERDW…VSQKFANDLK (94 aa)) is the FDX-ACB domain.

This sequence belongs to the phenylalanyl-tRNA synthetase beta subunit family. Type 1 subfamily. In terms of assembly, tetramer of two alpha and two beta subunits. The cofactor is Mg(2+).

The protein resides in the cytoplasm. The enzyme catalyses tRNA(Phe) + L-phenylalanine + ATP = L-phenylalanyl-tRNA(Phe) + AMP + diphosphate + H(+). The polypeptide is Phenylalanine--tRNA ligase beta subunit (Protochlamydia amoebophila (strain UWE25)).